A 142-amino-acid chain; its full sequence is Small heat shock protein IbpB (142 aa).

The sHSP domain maps to 26–137; the sequence is AGESQSFPPY…APQRIAISER (112 aa).

The protein belongs to the small heat shock protein (HSP20) family. In terms of assembly, homodimer. Forms homomultimers of about 100-150 subunits at optimal growth temperatures. Conformation changes to oligomers at high temperatures or high ionic concentrations. The decrease in size of the multimers is accompanied by an increase in chaperone activity.

Its subcellular location is the cytoplasm. Functionally, associates with aggregated proteins, together with IbpA, to stabilize and protect them from irreversible denaturation and extensive proteolysis during heat shock and oxidative stress. Aggregated proteins bound to the IbpAB complex are more efficiently refolded and reactivated by the ATP-dependent chaperone systems ClpB and DnaK/DnaJ/GrpE. Its activity is ATP-independent. This Klebsiella pneumoniae subsp. pneumoniae (strain ATCC 700721 / MGH 78578) protein is Small heat shock protein IbpB.